The sequence spans 158 residues: Auxin-responsive protein IAA31 (158 aa).

A compositionally biased stretch (low complexity) spans 1 to 40; it reads MEVSNSCSSFSSSSVDSTKPSPSESSVNLSLSLTFPSTSP. Residues 1 to 49 are disordered; that stretch reads MEVSNSCSSFSSSSVDSTKPSPSESSVNLSLSLTFPSTSPQREARQDWP. Residues 29–33 carry the EAR-like (transcriptional repression) motif; it reads LSLSL. Residues 72–157 enclose the PB1 domain; that stretch reads SLFVKVYMEG…RRLKITRPER (86 aa).

The protein belongs to the Aux/IAA family. In terms of assembly, homodimers and heterodimers.

The protein resides in the nucleus. Aux/IAA proteins are short-lived transcriptional factors that function as repressors of early auxin response genes at low auxin concentrations. Repression is thought to result from the interaction with auxin response factors (ARFs), proteins that bind to the auxin-responsive promoter element (AuxRE). Formation of heterodimers with ARF proteins may alter their ability to modulate early auxin response genes expression. This is Auxin-responsive protein IAA31 (IAA31) from Arabidopsis thaliana (Mouse-ear cress).